A 180-amino-acid chain; its full sequence is Large ribosomal subunit protein uL6 (180 aa).

Belongs to the universal ribosomal protein uL6 family. Part of the 50S ribosomal subunit.

Functionally, this protein binds to the 23S rRNA, and is important in its secondary structure. It is located near the subunit interface in the base of the L7/L12 stalk, and near the tRNA binding site of the peptidyltransferase center. In Borrelia duttonii (strain Ly), this protein is Large ribosomal subunit protein uL6.